We begin with the raw amino-acid sequence, 478 residues long: RNA-binding protein 42 (478 aa).

Low complexity predominate over residues 1–20; it reads MASAMAGAGPAPGLPVAGGP. Residues 1–33 are disordered; that stretch reads MASAMAGAGPAPGLPVAGGPVVPGPGVGIPGKS. Position 2 is an N-acetylalanine (Ala2). A Phosphoserine modification is found at Ser133. Residues Arg151, Arg156, Arg166, and Arg179 each carry the asymmetric dimethylarginine modification. Disordered regions lie at residues 171-209 and 317-354; these read LSSA…PPMA and SLRP…PEKL. The span at 193-205 shows a compositional bias: pro residues; that stretch reads PPLPGPPGPPMML. A necessary for interaction with HNRNPK region spans residues 234–478; that stretch reads DLGLGLGLGL…QKEKKKLGLR (245 aa). Basic and acidic residues predominate over residues 343–354; it reads GEDKKKGKPEKL. In terms of domain architecture, RRM spans 379–457; sequence FRIFCGDLGN…RPIKLRKSMW (79 aa).

Belongs to the RRM RBM42 family. In terms of assembly, interacts with HNRNPK.

It localises to the nucleus. It is found in the cytoplasm. Binds (via the RRM domain) to the 3' untranslated region (UTR) of p21 mRNA. This is RNA-binding protein 42 (Rbm42) from Rattus norvegicus (Rat).